The chain runs to 27 residues: Protein YkiD (27 aa).

The sequence is that of Protein YkiD from Escherichia coli (strain K12).